The following is a 175-amino-acid chain: Succinate dehydrogenase assembly factor 2, mitochondrial (175 aa).

Residues 42–71 (PFSDPELAHANNSLPSNSEEWPLPEPLDRT) form a disordered region. The span at 51 to 60 (ANNSLPSNSE) shows a compositional bias: polar residues.

This sequence belongs to the SDHAF2 family. Interacts with the flavoprotein subunit within the SDH catalytic dimer.

It localises to the mitochondrion matrix. Functionally, plays an essential role in the assembly of succinate dehydrogenase (SDH), an enzyme complex (also referred to as respiratory complex II) that is a component of both the tricarboxylic acid (TCA) cycle and the mitochondrial electron transport chain, and which couples the oxidation of succinate to fumarate with the reduction of ubiquinone (coenzyme Q) to ubiquinol. Required for flavinylation (covalent attachment of FAD) of the flavoprotein subunit of the SDH catalytic dimer. This chain is Succinate dehydrogenase assembly factor 2, mitochondrial, found in Cryptococcus neoformans var. neoformans serotype D (strain B-3501A) (Filobasidiella neoformans).